Reading from the N-terminus, the 452-residue chain is MMCGLEIHVQLNTNSKLFCSCPTNYQSAPNNTNICPVCLNQPGAKPYPPNQAALDNAIKVALMLGCEISNEVIYFMRKHYDYPDLSSGYQRTSVPVGIKGELNGVRIHEIHVEEDPGQYKPDRGTVDFNRSGIPLIEIVTEPDMKSPEEARNFLNELIRVLNYSGSARGEGTMRADVNISIEGGKRAEVKNVNSIRGAYKVLKFELIRQKNILRRGGEVQQETRAYLESQMITVPMRLKEDADDYRYIPDPDLPPLKIDPAHVEEIRQNMPEPAHLKTERFVEEYGIDKKDAKVLTSELELADAFEEVCKEVDANVAARLMRDELKRVLHYNKIQYAESKITPSDIVELINLIESKQVTPEAAHKLIEQMPGNDKTPTEIGNEMDIIGVVEDDAIVNAINQAIEENPNAVEDYKNGKDNAVNFLVGQVMRLTRGKANAGETNKMIKEKLDQL.

This sequence belongs to the GatB/GatE family. GatB subfamily. As to quaternary structure, heterotrimer of A, B and C subunits.

The catalysed reaction is L-glutamyl-tRNA(Gln) + L-glutamine + ATP + H2O = L-glutaminyl-tRNA(Gln) + L-glutamate + ADP + phosphate + H(+). It catalyses the reaction L-aspartyl-tRNA(Asn) + L-glutamine + ATP + H2O = L-asparaginyl-tRNA(Asn) + L-glutamate + ADP + phosphate + 2 H(+). Allows the formation of correctly charged Asn-tRNA(Asn) or Gln-tRNA(Gln) through the transamidation of misacylated Asp-tRNA(Asn) or Glu-tRNA(Gln) in organisms which lack either or both of asparaginyl-tRNA or glutaminyl-tRNA synthetases. The reaction takes place in the presence of glutamine and ATP through an activated phospho-Asp-tRNA(Asn) or phospho-Glu-tRNA(Gln). The chain is Aspartyl/glutamyl-tRNA(Asn/Gln) amidotransferase subunit B from Methanosphaera stadtmanae (strain ATCC 43021 / DSM 3091 / JCM 11832 / MCB-3).